Reading from the N-terminus, the 315-residue chain is Putative steroid dehydrogenase 2 (315 aa).

47 to 76 lines the NADP(+) pocket; the sequence is ASWAVVTGATDGIGKSYSFELARRGFNVYI. Residue Tyr202 is part of the active site.

The protein belongs to the short-chain dehydrogenases/reductases (SDR) family. 17-beta-HSD 3 subfamily.

The protein is Putative steroid dehydrogenase 2 (stdh-2) of Caenorhabditis elegans.